Here is a 49-residue protein sequence, read N- to C-terminus: Large ribosomal subunit protein bL33B (49 aa).

This sequence belongs to the bacterial ribosomal protein bL33 family.

This chain is Large ribosomal subunit protein bL33B, found in Bacillus cytotoxicus (strain DSM 22905 / CIP 110041 / 391-98 / NVH 391-98).